The chain runs to 418 residues: RapA guanosine triphosphatase-activating protein B (418 aa).

Residues 142–407 enclose the Rap-GAP domain; sequence LVKVCEPEFN…EKASALINVI (266 aa). The tract at residues 304–339 is disordered; that stretch reads NRVVGEQPSPSLTTTTTTTTTTSPTINSNSPTPSNK. The span at 311-338 shows a compositional bias: low complexity; it reads PSPSLTTTTTTTTTTSPTINSNSPTPSN.

Mediates the deactivation of rap1 during multicellular development and is required for normal morphogenesis. Also required for the correct patterning of specific subtypes of prestalk cells. The protein is RapA guanosine triphosphatase-activating protein B (rapgapB) of Dictyostelium discoideum (Social amoeba).